We begin with the raw amino-acid sequence, 610 residues long: Phragmoplastin DRP1A (610 aa).

Position 1 is an N-acetylmethionine (Met-1). The 270-residue stretch at 31-300 folds into the Dynamin-type G domain; the sequence is WDSLPAIAVV…LERVIKSRIP (270 aa). Positions 41 to 48 are G1 motif; that stretch reads GGQSSGKS. 44–49 contacts GTP; it reads SSGKSS. Positions 67–69 are G2 motif; it reads VTR. Residues 142 to 145 form a G3 motif region; it reads DLPG. The segment at 211 to 214 is G4 motif; sequence TKID. Residues 212 to 217 and 242 to 245 contribute to the GTP site; these read KIDLMD and NRSQ. The tract at residues 241-244 is G5 motif; it reads VNRS. The 93-residue stretch at 518–610 folds into the GED domain; the sequence is LRRIGSNVLS…SEIDAVAWSK (93 aa).

Belongs to the TRAFAC class dynamin-like GTPase superfamily. Dynamin/Fzo/YdjA family. As to quaternary structure, forms homodimer and may homooligomerize and heterooligomerize to form the phragmoplastin complex. Interacts with AGD3/VAN3. May interact with CALS1. Binds to AHK2. Binds to SH3P2. Forms a complex made of SH3P2 and DRP1A and triggers its accumulation at the cell plate. Interacts with DRP2B at the plasma membrane and in forming clathrin-coated vesicles (CCV). Binds to PHIP1. Ubiquitous. Expressed in leaves (at protein level).

It localises to the cytoplasm. The protein resides in the cytoskeleton. It is found in the phragmoplast. Its subcellular location is the cell cortex. The protein localises to the cytoplasmic vesicle. It localises to the clathrin-coated vesicle. The protein resides in the cell membrane. The enzyme catalyses GTP + H2O = GDP + phosphate + H(+). In terms of biological role, microtubule-associated force-producing protein that is targeted to at the leading edges of the forming cell plate during cytokinesis. Also plays a major role in plasma membrane maintenance and cell wall integrity with implications in vesicular trafficking, polar cell expansion, vascular formation, and other aspects of plant growth and development, including stigmatic papillae expansion. Collaboratively with DRP2B, participates in clathrin-coated vesicle formation during endocytosis. Necessary for BOR1 polar localization in low-boron (B) conditions as well as for BOR1 endocytosis and subsequent degradation under high-concentration of boron. Has a GTPase activity. Required for the sterols-dependent dynamic high lipid order observed at the cell plate of dividing cells. Together with SH3P2, converts the fused vesicles to tubular structures at the cell plate and phragmoplasts during cytokinesis. With DRP2B and PIP5K3, required for the precise coordination of polar ARAC3/ROP6 and ARAC4/ROP2 placement and subsequent root hair positioning during planar polarity formation in root hair-forming cells, probably by mediating the correct basal-to-planar polarity switching of D6PK into the polar, lipid-enriched domain. Involved in endocytosis required for cellulose deposition during cell wall formation and elongation. Interacts with plasma membrane-mimetic liposomes and induces their clustering. The protein is Phragmoplastin DRP1A of Arabidopsis thaliana (Mouse-ear cress).